Here is a 91-residue protein sequence, read N- to C-terminus: Small ribosomal subunit protein uS15 (91 aa).

It belongs to the universal ribosomal protein uS15 family. As to quaternary structure, part of the 30S ribosomal subunit. Forms a bridge to the 50S subunit in the 70S ribosome, contacting the 23S rRNA.

One of the primary rRNA binding proteins, it binds directly to 16S rRNA where it helps nucleate assembly of the platform of the 30S subunit by binding and bridging several RNA helices of the 16S rRNA. In terms of biological role, forms an intersubunit bridge (bridge B4) with the 23S rRNA of the 50S subunit in the ribosome. The protein is Small ribosomal subunit protein uS15 of Amoebophilus asiaticus (strain 5a2).